Reading from the N-terminus, the 503-residue chain is Maturase K (503 aa).

The protein belongs to the intron maturase 2 family. MatK subfamily.

The protein resides in the plastid. The protein localises to the chloroplast. Functionally, usually encoded in the trnK tRNA gene intron. Probably assists in splicing its own and other chloroplast group II introns. The polypeptide is Maturase K (Kunzea baxteri (Scarlet kunzea)).